The primary structure comprises 560 residues: Formate--tetrahydrofolate ligase (560 aa).

69-76 contributes to the ATP binding site; it reads TPAGEGKS.

This sequence belongs to the formate--tetrahydrofolate ligase family.

The catalysed reaction is (6S)-5,6,7,8-tetrahydrofolate + formate + ATP = (6R)-10-formyltetrahydrofolate + ADP + phosphate. The protein operates within one-carbon metabolism; tetrahydrofolate interconversion. In Bacillus pumilus (strain SAFR-032), this protein is Formate--tetrahydrofolate ligase.